We begin with the raw amino-acid sequence, 35 residues long: Photosystem II reaction center protein T (35 aa).

Residues 3 to 23 traverse the membrane as a helical segment; sequence ALVYTFLLIGTLGIIFFAIFF.

It belongs to the PsbT family. As to quaternary structure, PSII is composed of 1 copy each of membrane proteins PsbA, PsbB, PsbC, PsbD, PsbE, PsbF, PsbH, PsbI, PsbJ, PsbK, PsbL, PsbM, PsbT, PsbY, PsbZ, Psb30/Ycf12, at least 3 peripheral proteins of the oxygen-evolving complex and a large number of cofactors. It forms dimeric complexes.

It is found in the plastid. Its subcellular location is the chloroplast thylakoid membrane. Found at the monomer-monomer interface of the photosystem II (PS II) dimer, plays a role in assembly and dimerization of PSII. PSII is a light-driven water plastoquinone oxidoreductase, using light energy to abstract electrons from H(2)O, generating a proton gradient subsequently used for ATP formation. In Coleochaete orbicularis (Charophycean green alga), this protein is Photosystem II reaction center protein T.